The chain runs to 38 residues: Potassium channel toxin alpha-KTx 3.3 (38 aa).

3 cysteine pairs are disulfide-bonded: C8–C28, C14–C33, and C18–C35. The tract at residues 26–33 (GKCMNRKC) is interaction with Ca(2+)-activated K(+) channels.

Belongs to the short scorpion toxin superfamily. Potassium channel inhibitor family. Alpha-KTx 03 subfamily. In terms of tissue distribution, expressed by the venom gland.

Its subcellular location is the secreted. Functionally, potent inhibitor of shaker potassium channels as well as the mammalian homologs of shaker. This Leiurus hebraeus (Hebrew deathstalker scorpion) protein is Potassium channel toxin alpha-KTx 3.3.